Consider the following 161-residue polypeptide: Ubiquitin-conjugating enzyme 15 (161 aa).

The UBC core domain maps to 15 to 161; it reads IACNRLQKEL…TRWWFHDDKV (147 aa). Residue cysteine 99 is the Glycyl thioester intermediate of the active site.

The protein belongs to the ubiquitin-conjugating enzyme family.

The catalysed reaction is S-ubiquitinyl-[E1 ubiquitin-activating enzyme]-L-cysteine + [E2 ubiquitin-conjugating enzyme]-L-cysteine = [E1 ubiquitin-activating enzyme]-L-cysteine + S-ubiquitinyl-[E2 ubiquitin-conjugating enzyme]-L-cysteine.. The protein operates within protein modification; protein ubiquitination. In terms of biological role, accepts the ubiquitin from the E1 complex and catalyzes its covalent attachment to other proteins. This Arabidopsis thaliana (Mouse-ear cress) protein is Ubiquitin-conjugating enzyme 15 (UBC15).